Reading from the N-terminus, the 453-residue chain is Insulinoma-associated protein 1b (453 aa).

Positions 1 to 20 (MPKGFLVKRNKKAALVSYRI) are SNAG domain. The tract at residues 140–179 (NSNRSGTASGAHAPAIQTGAKRPSADAAERKVSSKSAKKP) is disordered. Over residues 162–171 (PSADAAERKV) the composition is skewed to basic and acidic residues. The C2H2-type 1 zinc-finger motif lies at 252 to 274 (YRCPECEKVFSCPANLASHRRWH). A disordered region spans residues 298 to 318 (AEFPSDRDTPSPGLSESGSED). 3 C2H2-type zinc fingers span residues 321–343 (YDCQ…ILGH), 383–406 (LTCP…RLLH), and 412–435 (FPCK…NKCH).

Belongs to the INSM1 family.

The protein localises to the nucleus. In terms of biological role, may act as a transcriptional regulator. May play a role in neurogenesis and neuroendocrine cell differentiation during embryonic development. This is Insulinoma-associated protein 1b (insm1b) from Danio rerio (Zebrafish).